An 88-amino-acid chain; its full sequence is Exodeoxyribonuclease 7 small subunit (88 aa).

Residues aspartate 69–glutamine 88 form a disordered region.

This sequence belongs to the XseB family. In terms of assembly, heterooligomer composed of large and small subunits.

It is found in the cytoplasm. It catalyses the reaction Exonucleolytic cleavage in either 5'- to 3'- or 3'- to 5'-direction to yield nucleoside 5'-phosphates.. Functionally, bidirectionally degrades single-stranded DNA into large acid-insoluble oligonucleotides, which are then degraded further into small acid-soluble oligonucleotides. The sequence is that of Exodeoxyribonuclease 7 small subunit from Xylella fastidiosa (strain M23).